The chain runs to 305 residues: Cyclin-dependent kinase 3 (305 aa).

In terms of domain architecture, Protein kinase spans 4–286 (FQKVEKIGEG…AKTALAHPYF (283 aa)). ATP is bound by residues 10–18 (IGEGTYGVV) and K33. D127 functions as the Proton acceptor in the catalytic mechanism.

Belongs to the protein kinase superfamily. CMGC Ser/Thr protein kinase family. CDC2/CDKX subfamily. Interacts with CABLES1 and CABLES2. Interacts with ATF1. Binding to CCNC/cyclin-C promotes RB1 phosphorylation. In terms of tissue distribution, expressed in cancer cell lines and glioblastoma tissue.

The enzyme catalyses L-seryl-[protein] + ATP = O-phospho-L-seryl-[protein] + ADP + H(+). It carries out the reaction L-threonyl-[protein] + ATP = O-phospho-L-threonyl-[protein] + ADP + H(+). Its function is as follows. Serine/threonine-protein kinase that plays a critical role in the control of the eukaryotic cell cycle; involved in G0-G1 and G1-S cell cycle transitions. Interacts with CCNC/cyclin-C during interphase. Phosphorylates histone H1, ATF1, RB1 and CABLES1. ATF1 phosphorylation triggers ATF1 transactivation and transcriptional activities, and promotes cell proliferation and transformation. CDK3/cyclin-C mediated RB1 phosphorylation is required for G0-G1 transition. Promotes G1-S transition probably by contributing to the activation of E2F1, E2F2 and E2F3 in a RB1-independent manner. This Homo sapiens (Human) protein is Cyclin-dependent kinase 3 (CDK3).